The sequence spans 402 residues: Caspase-1 (402 aa).

The 91-residue stretch at 1-91 folds into the CARD domain; sequence MADKVLRAKR…YLAEILELQS (91 aa). Positions 1 to 118 are excised as a propeptide; the sequence is MADKVLRAKR…PFSSETKEKL (118 aa). Residues His236 and Cys284 contribute to the active site. The propeptide occupies 297–314; the sequence is SVGNSEEGFLTDAIFEDD. A Phosphoserine modification is found at Ser301.

The protein belongs to the peptidase C14A family. In terms of assembly, heterotetramer that consists of two anti-parallel arranged heterodimers, each one formed by a 20 kDa (Caspase-1 subunit p20) and a 10 kDa (Caspase-1 subunit p10) subunit. May be a component of the inflammasome, a protein complex which also includes PYCARD, CARD8 and NLRP2 and whose function would be the activation of pro-inflammatory caspases. Component of the AIM2 PANoptosome complex, a multiprotein complex that drives inflammatory cell death (PANoptosis). Both the p10 and p20 subunits interact with MEFV. Interacts with CARD17P/INCA and CARD18. Interacts with SERPINB1; this interaction regulates CASP1 activity. As to quaternary structure, heterotetramer that consists of two anti-parallel arranged heterodimers, each one formed by a 20 kDa (Caspase-1 subunit p20) and a 10 kDa (Caspase-1 subunit p10) subunit. Post-translationally, the two subunits are derived from the precursor sequence by an autocatalytic mechanism. In terms of processing, ubiquitinated via 'Lys-11'-linked polyubiquitination. Deubiquitinated by USP8.

The protein localises to the cytoplasm. It localises to the cell membrane. It carries out the reaction Strict requirement for an Asp residue at position P1 and has a preferred cleavage sequence of Tyr-Val-Ala-Asp-|-.. In terms of biological role, thiol protease involved in a variety of inflammatory processes by proteolytically cleaving other proteins, such as the precursors of the inflammatory cytokines interleukin-1 beta (IL1B) and interleukin 18 (IL18) as well as the pyroptosis inducer Gasdermin-D (GSDMD), into active mature peptides. Plays a key role in cell immunity as an inflammatory response initiator: once activated through formation of an inflammasome complex, it initiates a pro-inflammatory response through the cleavage of the two inflammatory cytokines IL1B and IL18, releasing the mature cytokines which are involved in a variety of inflammatory processes. Cleaves a tetrapeptide after an Asp residue at position P1. Also initiates pyroptosis, a programmed lytic cell death pathway, through cleavage of GSDMD. In contrast to cleavage of interleukin IL1B, recognition and cleavage of GSDMD is not strictly dependent on the consensus cleavage site but depends on an exosite interface on CASP1 that recognizes and binds the Gasdermin-D, C-terminal (GSDMD-CT) part. Cleaves and activates CASP7 in response to bacterial infection, promoting plasma membrane repair. Upon inflammasome activation, during DNA virus infection but not RNA virus challenge, controls antiviral immunity through the cleavage of CGAS, rendering it inactive. In apoptotic cells, cleaves SPHK2 which is released from cells and remains enzymatically active extracellularly. This Rattus norvegicus (Rat) protein is Caspase-1 (Casp1).